Consider the following 616-residue polypeptide: Chaperone protein HscA homolog (616 aa).

The protein belongs to the heat shock protein 70 family.

Chaperone involved in the maturation of iron-sulfur cluster-containing proteins. Has a low intrinsic ATPase activity which is markedly stimulated by HscB. The sequence is that of Chaperone protein HscA homolog from Mannheimia succiniciproducens (strain KCTC 0769BP / MBEL55E).